We begin with the raw amino-acid sequence, 420 residues long: UDP-N-acetylglucosamine 1-carboxyvinyltransferase (420 aa).

Lysine 22–asparagine 23 is a phosphoenolpyruvate binding site. Arginine 93 lines the UDP-N-acetyl-alpha-D-glucosamine pocket. Cysteine 117 serves as the catalytic Proton donor. The residue at position 117 (cysteine 117) is a 2-(S-cysteinyl)pyruvic acid O-phosphothioketal. UDP-N-acetyl-alpha-D-glucosamine contacts are provided by aspartate 307 and isoleucine 329.

This sequence belongs to the EPSP synthase family. MurA subfamily.

The protein localises to the cytoplasm. It carries out the reaction phosphoenolpyruvate + UDP-N-acetyl-alpha-D-glucosamine = UDP-N-acetyl-3-O-(1-carboxyvinyl)-alpha-D-glucosamine + phosphate. It functions in the pathway cell wall biogenesis; peptidoglycan biosynthesis. Cell wall formation. Adds enolpyruvyl to UDP-N-acetylglucosamine. The polypeptide is UDP-N-acetylglucosamine 1-carboxyvinyltransferase (Shewanella pealeana (strain ATCC 700345 / ANG-SQ1)).